A 98-amino-acid chain; its full sequence is Large ribosomal subunit protein uL23 (98 aa).

Belongs to the universal ribosomal protein uL23 family. As to quaternary structure, part of the 50S ribosomal subunit. Contacts protein L29, and trigger factor when it is bound to the ribosome.

Functionally, one of the early assembly proteins it binds 23S rRNA. One of the proteins that surrounds the polypeptide exit tunnel on the outside of the ribosome. Forms the main docking site for trigger factor binding to the ribosome. This is Large ribosomal subunit protein uL23 from Rickettsia typhi (strain ATCC VR-144 / Wilmington).